The sequence spans 466 residues: Ribulose bisphosphate carboxylase large chain (466 aa).

Lys5 is subject to N6,N6,N6-trimethyllysine. Positions 114 and 164 each coordinate substrate. Lys166 serves as the catalytic Proton acceptor. Lys168 contributes to the substrate binding site. Mg(2+) contacts are provided by Lys192, Asp194, and Glu195. Lys192 carries the N6-carboxylysine modification. His285 (proton acceptor) is an active-site residue. Arg286, His318, and Ser370 together coordinate substrate.

Belongs to the RuBisCO large chain family. Type I subfamily. Heterohexadecamer of 8 large chains and 8 small chains. The cofactor is Mg(2+).

It is found in the plastid. The protein localises to the chloroplast. It catalyses the reaction 2 (2R)-3-phosphoglycerate + 2 H(+) = D-ribulose 1,5-bisphosphate + CO2 + H2O. The catalysed reaction is D-ribulose 1,5-bisphosphate + O2 = 2-phosphoglycolate + (2R)-3-phosphoglycerate + 2 H(+). Its function is as follows. RuBisCO catalyzes two reactions: the carboxylation of D-ribulose 1,5-bisphosphate, the primary event in carbon dioxide fixation, as well as the oxidative fragmentation of the pentose substrate in the photorespiration process. Both reactions occur simultaneously and in competition at the same active site. This chain is Ribulose bisphosphate carboxylase large chain, found in Cornus kousa (Kousa dogwood).